The sequence spans 716 residues: Exocyst complex component 8 (716 aa).

At serine 15 the chain carries Phosphoserine. A disordered region spans residues 129 to 150 (GFLPGPAGVPREGSGTGEEGKQ). Residues 173–273 (YLVYNGDLVE…WLEVLEETKR (101 aa)) form the PH domain. Basic and acidic residues predominate over residues 275-284 (LSDKRRREQE). The interval 275 to 319 (LSDKRRREQEEAAAPRAPPPVTSKGSNPFEDEDDEELATPEAEEE) is disordered. Over residues 303 to 319 (FEDEDDEELATPEAEEE) the composition is skewed to acidic residues. Threonine 313 is subject to Phosphothreonine.

Belongs to the EXO84 family. As to quaternary structure, the exocyst complex is composed of EXOC1, EXOC2, EXOC3, EXOC4, EXOC5, EXOC6, EXOC7 and EXOC8. Interacts (via PH domain) with GTP-bound RALA and RALB. Interacts with SH3BP1; required for the localization of both SH3BP1 and the exocyst to the leading edge of migrating cells.

The protein resides in the cytoplasm. It localises to the perinuclear region. It is found in the cell projection. The protein localises to the growth cone. Component of the exocyst complex involved in the docking of exocytic vesicles with fusion sites on the plasma membrane. The chain is Exocyst complex component 8 (Exoc8) from Mus musculus (Mouse).